Reading from the N-terminus, the 448-residue chain is tRNA modification GTPase MnmE (448 aa).

(6S)-5-formyl-5,6,7,8-tetrahydrofolate-binding residues include R22, E83, and R122. A TrmE-type G domain is found at G219–K369. N229 is a binding site for K(+). GTP contacts are provided by residues N229–S234, S248–T254, and D273–G276. Residue S233 coordinates Mg(2+). K(+) contacts are provided by S248, I250, and T253. A Mg(2+)-binding site is contributed by T254. Residue K448 participates in (6S)-5-formyl-5,6,7,8-tetrahydrofolate binding.

Belongs to the TRAFAC class TrmE-Era-EngA-EngB-Septin-like GTPase superfamily. TrmE GTPase family. As to quaternary structure, homodimer. Heterotetramer of two MnmE and two MnmG subunits. K(+) is required as a cofactor.

It is found in the cytoplasm. Functionally, exhibits a very high intrinsic GTPase hydrolysis rate. Involved in the addition of a carboxymethylaminomethyl (cmnm) group at the wobble position (U34) of certain tRNAs, forming tRNA-cmnm(5)s(2)U34. The sequence is that of tRNA modification GTPase MnmE from Acholeplasma laidlawii (strain PG-8A).